The chain runs to 150 residues: MEFINQTFFSDYSEGKIDTIPYALGIVLALTNGSRILKFINLLISLLRKFIITSKTVIGKFKIENNTSHQNDDIHKEYEEVMKQMREMRVHVTALFDSIHKDNMEWRMSESIRREKKREMKASTAENEVKIHTNDVNICDTSGLETEVCL.

At 1–15 (MEFINQTFFSDYSEG) the chain is on the lumenal side. An N-linked (GlcNAc...) asparagine; by host glycan is attached at Asn-5. The helical; Signal-anchor for type III membrane protein transmembrane segment at 16–30 (KIDTIPYALGIVLAL) threads the bilayer. The Cytoplasmic portion of the chain corresponds to 31 to 150 (TNGSRILKFI…TSGLETEVCL (120 aa)).

This sequence belongs to the rotavirus NSP4 family. As to quaternary structure, homotetramer. Interacts with the immature particle in the viroplasm. Interacts with host CAV1, early and late in infection. Interacts with host integrin ITGA1/ITGB1 heterodimer. Interacts with host integrin ITGA2/ITGB1 heterodimer. Interaction with microtubules blocks trafficking to the Golgi apparatus. In terms of processing, the N-glycosyl content is primarily Man(9)GlcNAc, with a small amount of Man(8)GlcNAc.

The protein localises to the host rough endoplasmic reticulum membrane. The protein resides in the host membrane. It localises to the host caveola. It is found in the secreted. Functionally, plays an essential role in the virus replication cycle by acting as a viroporin. Creates a pore in the host endoplasmic reticulum and as a consequence releases Ca(2+) in the cytoplasm of infected cell. In turn, high levels of cytoplasmic calcium trigger membrane trafficking and transport of viral ER-associated proteins to viroplasms, sites of viral genome replication and immature particle assembly. The secreted form acts as an enterotoxin that causes phospholipase C-dependent elevation of the intracellular calcium concentration in host intestinal mucosa cells. Increased concentration of intracellular calcium disrupts the cytoskeleton and the tight junctions, raising the paracellular permeability. Potentiates chloride ion secretion through a calcium ion-dependent signaling pathway, inducing age-dependent diarrhea. To perform this enterotoxigenic role in vivo, NSP4 is released from infected enterocytes in a soluble form capable of diffusing within the intestinal lumen and interacting with host plasma membrane receptors on neighboring epithelial cells such as integrins ITGA1/ITGB1 and ITGA2/ITGB1. The polypeptide is Non-structural glycoprotein 4 (Sus scrofa (Pig)).